Here is a 367-residue protein sequence, read N- to C-terminus: MFDVFGSVKGLLKIDQVCIDNNVFRMHYKATVIILIAFSLLVTSRQYIGDPIDCIVDEIPLGVMDTYCWIYSTFTVPERLTGITGRDVVQPGVGSHVEGEDEVKYHKYYQWVCFVLFFQAILFYVPRYLWKSWEGGRLKMLVMDLNSPIVNDECKNDRKKILVDYFIGNLNRHNFYAFRFFVCEALNFVNVIGQIYFVDFFLDGEFSTYGSDVLKFTELEPDERIDPMARVFPKVTKCTFHKYGPSGSVQTHDGLCVLPLNIVNEKIYVFLWFWFIILSIMSGISLIYRIAVVAGPKLRHLLLRARSRLAESEEVELVANKCNIGDWFLLYQLGKNIDPLIYKEVISDLSREMSGDEHSAHKRPFDA.

Residues 1–22 (MFDVFGSVKGLLKIDQVCIDNN) lie on the Cytoplasmic side of the membrane. A helical membrane pass occupies residues 23-43 (VFRMHYKATVIILIAFSLLVT). Over 44-109 (SRQYIGDPID…EDEVKYHKYY (66 aa)) the chain is Extracellular. The helical transmembrane segment at 110–130 (QWVCFVLFFQAILFYVPRYLW) threads the bilayer. Residues 130 to 179 (WKSWEGGRLKMLVMDLNSPIVNDECKNDRKKILVDYFIGNLNRHNFYAFR) are interaction with shg. Topologically, residues 131-179 (KSWEGGRLKMLVMDLNSPIVNDECKNDRKKILVDYFIGNLNRHNFYAFR) are cytoplasmic. Residues 180–200 (FFVCEALNFVNVIGQIYFVDF) form a helical membrane-spanning segment. The Extracellular segment spans residues 201-266 (FLDGEFSTYG…VLPLNIVNEK (66 aa)). The helical transmembrane segment at 267–287 (IYVFLWFWFIILSIMSGISLI) threads the bilayer. The Cytoplasmic portion of the chain corresponds to 288–367 (YRIAVVAGPK…HSAHKRPFDA (80 aa)).

This sequence belongs to the pannexin family. In terms of assembly, monomer and heterooligomer with ogre or Inx3 (via cytoplasmic C-terminal region). Interacts (via cytoplasmic loop) with shg (via cytoplasmic region). Interacts with arm. In ovary, expressed in inner germarial sheath cells, prefollicular cells, follicle cells, nurse cells and oocytes. Expressed in embryonic epithelial cells. Expressed in foregut and hindgut from stage 11-17, segmentally repeated tracheal placodes at stage 14, salivary gland at stage 16 and proventriculus at stage 16-17 (at protein level). During germband extension stage (stage 7), expressed in epidermal epithelial cells. Expressed in cephalic furrow. Repeating epidermal pattern emerges at stage 11, refines to one or two cells at each side of the segment borders by stage 13. Expressed in the imaginal wing disk. In pupae, expressed in the CNS and in primary, secondary and tertiary pigment cells of the retina. Expressed in optic lamina of the adult CNS.

Its subcellular location is the cell membrane. The protein resides in the cell junction. It localises to the gap junction. It is found in the cytoplasm. The protein localises to the apical cell membrane. Its subcellular location is the apicolateral cell membrane. The protein resides in the basolateral cell membrane. It localises to the lateral cell membrane. Functionally, structural components of the gap junctions. Involved in gap junctional communication between germline and somatic cells which is essential for normal oogenesis. In embryonic epidermis, required for epithelial morphogenesis. Required for keyhole formation during early stages of proventriculus development in response to wg signaling. In follicle cells, promotes the formation of egg chambers in part through regulation of shg and baz at the boundary between germ cells and follicle cells. In inner germarial sheath cells, required for survival of early germ cells and for cyst formation. This is Innexin inx2 (Inx2) from Drosophila melanogaster (Fruit fly).